We begin with the raw amino-acid sequence, 103 residues long: UPF0145 protein BC_1816 (103 aa).

This sequence belongs to the UPF0145 family.

The sequence is that of UPF0145 protein BC_1816 from Bacillus cereus (strain ATCC 14579 / DSM 31 / CCUG 7414 / JCM 2152 / NBRC 15305 / NCIMB 9373 / NCTC 2599 / NRRL B-3711).